The sequence spans 224 residues: Urease accessory protein UreF (224 aa).

It belongs to the UreF family. As to quaternary structure, ureD, UreF and UreG form a complex that acts as a GTP-hydrolysis-dependent molecular chaperone, activating the urease apoprotein by helping to assemble the nickel containing metallocenter of UreC. The UreE protein probably delivers the nickel.

The protein localises to the cytoplasm. Its function is as follows. Required for maturation of urease via the functional incorporation of the urease nickel metallocenter. The chain is Urease accessory protein UreF from Citrobacter koseri (strain ATCC BAA-895 / CDC 4225-83 / SGSC4696).